We begin with the raw amino-acid sequence, 839 residues long: Transient receptor potential cation channel subfamily V member 1 (839 aa).

Residues 1–60 (MEKWASLDSDESEPPAQENSCPDPPDRDPNSKPPPAKPHIFATRSRTRLFGKGDSEEASP) form a disordered region. The Cytoplasmic segment spans residues 1–433 (MEKWASLDSD…QDKWDRFVKR (433 aa)). One copy of the ANK 1 repeat lies at 111–139 (RLYDRRSIFDAVAQSNCQELESLLSFLQK). Residue arginine 116 participates in ATP binding. The residue at position 117 (serine 117) is a Phosphoserine; by PKA and PKD. At threonine 145 the chain carries Phosphothreonine; by PKA; in vitro. Residues 154-186 (TGKTCLLKAMLNLHNGQNDTIALLLDIARKTDS) form an ANK 2 repeat. ATP contacts are provided by residues lysine 156, lysine 161, asparagine 165, 200-203 (YKGQ), and 211-212 (ER). ANK repeat units follow at residues 204 to 229 (TALH…ADVQ), 250 to 277 (ELPL…QPAD), 286 to 322 (NTVL…KLHP), and 336 to 359 (TPLA…REIH). Residue threonine 371 is modified to Phosphothreonine; by PKA; in vitro. Residues 394–416 (NSVLEVIAYSSSETPNRHDMLLV) form an ANK 7 repeat. The helical transmembrane segment at 434–455 (IFYFNFFVYCLYMIIFTTAAYY) threads the bilayer. Residues 456-472 (RPVEGLPPYKLNNTVGD) lie on the Extracellular side of the membrane. A helical membrane pass occupies residues 473–497 (YFRVTGEILSVSGGVYFFFRGIQYF). At 498 to 510 (LQRRPSLKSLFVD) the chain is on the cytoplasmic side. The residue at position 503 (serine 503) is a Phosphoserine; by PKC/PRKCE. The helical transmembrane segment at 511–532 (SYSEILFFVQSLFMLVSVVLYF) threads the bilayer. 512 to 513 (YS) is a binding site for resiniferatoxin. The Extracellular portion of the chain corresponds to 533-535 (SHR). Residues 536–556 (KEYVASMVFSLAMGWTNMLYY) traverse the membrane as a helical segment. Resiniferatoxin contacts are provided by threonine 551 and arginine 558. At 557-559 (TRG) the chain is on the cytoplasmic side. The chain crosses the membrane as a helical span at residues 560-598 (FQQMGIYAVMIEKMILRDLCRFMFVYLVFLFGFSTAVVT). Over 599–630 (LIEDGKNNSLPVESPPHKCRGSACRPGNSYNS) the chain is Extracellular. Asparagine 605 carries an N-linked (GlcNAc...) asparagine glycan. An intramembrane region (pore-forming) is located at residues 631–652 (LYSTCLELFKFTIGMGDLEFTE). Na(+) is bound at residue glycine 644. The Selectivity filter signature appears at 644 to 647 (GMGD). Aspartate 647 lines the Ca(2+) pocket. The Extracellular segment spans residues 653 to 656 (NYDF). A helical membrane pass occupies residues 657-683 (KAVFIILLLAYVILTYILLLNMLIALM). The Cytoplasmic portion of the chain corresponds to 684–839 (GETVNKIAQE…FKDSMAPGEK (156 aa)). Residues 685–713 (ETVNKIAQESKNIWKLQRAITILDTEKSF) are AD. A Phosphothreonine modification is found at threonine 705. The interaction with calmodulin stretch occupies residues 768-802 (EGVKRTLSFSLRSGRVSGRNWKNFALVPLLRDAST). Serine 775 is modified (phosphoserine). Positions 778–793 (LRSGRVSGRNWKNFAL) are required for PIP2-mediated channel inhibition. Residue serine 801 is modified to Phosphoserine; by PKC/PRKCE and PKC/PRKCZ. Basic and acidic residues predominate over residues 802-815 (TRDRHSTQPEEVQL). Positions 802 to 839 (TRDRHSTQPEEVQLKHYTGSLKPEDAEVFKDSMAPGEK) are disordered. Serine 821 is subject to Phosphoserine. The span at 823–839 (KPEDAEVFKDSMAPGEK) shows a compositional bias: basic and acidic residues.

Belongs to the transient receptor (TC 1.A.4) family. TrpV subfamily. TRPV1 sub-subfamily. As to quaternary structure, homotetramer. May also form a heteromeric channel with TRPV3. Interacts with CALM, PRKCM and CSK. Interacts with PRKCG and NTRK1, probably by forming a trimeric complex. Interacts with PIRT. Interacts with the Scolopendra mutilans RhTx toxin. Interacts with TMEM100. Interacts with PACS2. Phosphorylation by PKA reverses capsaicin-induced dephosphorylation at multiple sites probably including Ser-117 as a major phosphorylation site. Phosphorylation by CAMKII seems to regulate binding to vanilloids. Phosphorylated and modulated by PRKCE, PRKCM and probably PRKCZ. Dephosphorylation by calcineurin seems to lead to receptor desensitization and phosphorylation by CAMKII recovers activity. As to expression, detected in neurons in the root ganglia (at protein level). Detected in dorsal root ganglia.

Its subcellular location is the postsynaptic cell membrane. It localises to the cell projection. The protein localises to the dendritic spine membrane. It is found in the cell membrane. The enzyme catalyses Ca(2+)(in) = Ca(2+)(out). It catalyses the reaction Mg(2+)(in) = Mg(2+)(out). The catalysed reaction is Na(+)(in) = Na(+)(out). It carries out the reaction K(+)(in) = K(+)(out). The channel is sensitized by ATP binding. Repeated stimulation with capsaicin gives rise to progressively smaller responses, due to desensitization. This desensitization is triggered by the influx of calcium ions and is inhibited by elevated ATP levels. Ca(2+) and CALM displace ATP from its binding site and trigger a conformation change that leads to a closed, desensitized channel. The double-knot toxin (DkTx) from the Chinese earth tiger tarantula activates the channel and traps it in an open conformation. The Scolopendra mutilans RhTx toxin potentiates the heat activation pathway mediated by this channel by binding to the charge-rich outer pore region (in an activated state). Channel activity is activated via the interaction with PIRT and phosphatidylinositol 4,5-bisphosphate (PIP2). Both PIRT and PIP2 are required to activate channel activity. Intracellular PIP2 inhibits desensitization. Its function is as follows. Non-selective calcium permeant cation channel involved in detection of noxious chemical and thermal stimuli. Seems to mediate proton influx and may be involved in intracellular acidosis in nociceptive neurons. Involved in mediation of inflammatory pain and hyperalgesia. Sensitized by a phosphatidylinositol second messenger system activated by receptor tyrosine kinases, which involves PKC isozymes and PCL. Activation by vanilloids, like capsaicin, and temperatures higher than 42 degrees Celsius. Upon activation, exhibits a time- and Ca(2+)-dependent outward rectification, followed by a long-lasting refractory state. Mild extracellular acidic pH (6.5) potentiates channel activation by noxious heat and vanilloids, whereas acidic conditions (pH &lt;6) directly activate the channel. Can be activated by endogenous compounds, including 12-hydroperoxytetraenoic acid and bradykinin. Acts as ionotropic endocannabinoid receptor with central neuromodulatory effects. Triggers a form of long-term depression (TRPV1-LTD) mediated by the endocannabinoid anandamine in the hippocampus and nucleus accumbens by affecting AMPA receptors endocytosis. The sequence is that of Transient receptor potential cation channel subfamily V member 1 (Trpv1) from Mus musculus (Mouse).